Consider the following 30-residue polypeptide: Trypsin inhibitor 1 (30 aa).

Intrachain disulfides connect Cys4–Cys21, Cys11–Cys23, and Cys17–Cys29.

It belongs to the protease inhibitor I7 (squash-type serine protease inhibitor) family.

Its subcellular location is the secreted. Functionally, inhibits trypsin. In Citrullus lanatus (Watermelon), this protein is Trypsin inhibitor 1.